The primary structure comprises 810 residues: Ecotropic viral integration site 5 protein homolog (810 aa).

The tract at residues 1 to 483 is interaction with alpha-tubulin, gamma-tubulin, BIRC5 and FBXO5; that stretch reads MVTNKMTAAF…EAESQCALKE (483 aa). Disordered stretches follow at residues 49–80 and 98–123; these read VASP…QLSP and TDSK…SSSA. Residues 51–80 are compositionally biased toward low complexity; sequence SPSTSLHTTSSSTTLSTPALSPSSPSQLSP. A phosphoserine mark is found at serine 102 and serine 113. A compositionally biased stretch (low complexity) spans 103-123; that stretch reads LRSVNGSRRNSGSSLVSSSSA. Residues 128–693 are dimerization; it reads SHLEEDSWIL…LNKSDSNQYI (566 aa). Positions 163-348 constitute a Rab-GAP TBC domain; that stretch reads GIPHHFRAIV…RIFDIFMSEG (186 aa). Positions 377 to 810 are targeting to the centrosomes; that stretch reads QHFQKVIPHQ…RRRESYSTTV (434 aa). Residues 406 to 716 adopt a coiled-coil conformation; sequence KKMKKLEKEY…LRCLKGQRGF (311 aa). Residues 487–810 form an interaction with AURKB and INCENP region; that stretch reads KVLDIEKRNN…RRRESYSTTV (324 aa). A phosphoserine mark is found at serine 497, serine 689, serine 776, and serine 778. The interval 756 to 810 is disordered; it reads GFPLHGKSGSMSLDPAVADGSESETEDSVLETRESNQVVQKERPPRRRESYSTTV. Basic and acidic residues predominate over residues 785–810; the sequence is LETRESNQVVQKERPPRRRESYSTTV.

As to quaternary structure, dimeric and monomeric. Interacts with alpha- and gamma-tubulin. Interacts with FBXO5. Interacts with the chromosome passenger complex (CPC) which is at least composed of AURKB/aurora-B, BIRC5/survivin, CDCA8/borealin and INCENP. Post-translationally, probably phosphorylated by PLK1; may be required for degradation during mitosis. In terms of processing, ubiquitinated. Degradation during prophase is ubiquitin-dependent. In terms of tissue distribution, expressed in various cell lines (at protein level). Expressed in a wide range of tissues including brain and adrenal.

Its subcellular location is the nucleus. The protein resides in the cytoplasm. The protein localises to the cytoskeleton. It is found in the microtubule organizing center. It localises to the centrosome. Its subcellular location is the spindle. Functionally, functions as a regulator of cell cycle progression by stabilizing the FBXO5 protein and promoting cyclin-A accumulation during interphase. May play a role in cytokinesis. In Homo sapiens (Human), this protein is Ecotropic viral integration site 5 protein homolog (EVI5).